A 110-amino-acid chain; its full sequence is Large ribosomal subunit protein uL22 (110 aa).

This sequence belongs to the universal ribosomal protein uL22 family. As to quaternary structure, part of the 50S ribosomal subunit.

In terms of biological role, this protein binds specifically to 23S rRNA; its binding is stimulated by other ribosomal proteins, e.g. L4, L17, and L20. It is important during the early stages of 50S assembly. It makes multiple contacts with different domains of the 23S rRNA in the assembled 50S subunit and ribosome. Functionally, the globular domain of the protein is located near the polypeptide exit tunnel on the outside of the subunit, while an extended beta-hairpin is found that lines the wall of the exit tunnel in the center of the 70S ribosome. In Buchnera aphidicola subsp. Schizaphis graminum (strain Sg), this protein is Large ribosomal subunit protein uL22.